Reading from the N-terminus, the 51-residue chain is Large ribosomal subunit protein eL39z (51 aa).

This sequence belongs to the eukaryotic ribosomal protein eL39 family.

This Oryza sativa subsp. japonica (Rice) protein is Large ribosomal subunit protein eL39z (RPL39A).